A 2150-amino-acid chain; its full sequence is Zinc finger protein sdc-3 (2150 aa).

Residues 443–987 are dosage compensation domain 1; it reads QEITSPMFAL…DQVENEEPER (545 aa). Disordered regions lie at residues 874–894, 1261–1373, 1411–1448, and 1491–1670; these read EKEW…EEED, GSVV…GPEV, FETS…GPIN, and EVLQ…SEKL. Residues 1267–1293 are compositionally biased toward polar residues; that stretch reads TNQQEENVTSEGPTLQEGSSIPSSSHI. Residues 1321–1333 are compositionally biased toward basic residues; sequence KKSGKTTRGRPKK. Basic and acidic residues predominate over residues 1347–1357; sequence GQKEEAAHEPE. The span at 1504–1524 shows a compositional bias: basic residues; it reads SSKKRGRRRKKTPPHIAKARK. A sex determination domain region spans residues 1508–1516; sequence RGRRRKKTP. Residues 1585-1598 are compositionally biased toward basic and acidic residues; it reads EDLHETERPGHVGE. Residues 1638 to 1648 show a composition bias toward polar residues; sequence IQSQAGTNASP. C2H2-type zinc fingers lie at residues 2078 to 2105 and 2117 to 2141; these read HKCV…GKLH and DDCQ…NHHH. The tract at residues 2080-2105 is dosage compensation domain 2; it reads CVQCSIRNQSVYFSSYSLLELHGKLH.

Component of the SDC complex, which consists of sdc-1, sdc-2 and sdc-3. Within the complex, interacts with sdc-1 and sdc-2. Interacts with dpy-21. Sumoylated. Sumoylation is important for assembly of the dosage compensation complex and its robust binding to the X chromosome. Expressed in somatic and in germline tissues in hermaphrodites (XX). In males (XO), only present in embryos younger than the 100-cell stage (at protein level).

It is found in the chromosome. The protein resides in the nucleus. Component of the SDC complex that functions in sex determination and in X chromosome dosage compensation specifically in hermaphrodite (XX) animals. Plays a central role in the recruitment of the condensin I-like dosage compensation complex to the male sex-determining autosomal gene her-1, thereby contributing to its repression and initiating hermaphrodite sexual development. Involved in the recruitment and assembly of the dosage compensation complex and the dosage compensation protein dpy-21 onto the X chromosomes in hermaphrodites, which leads to a reduction of X-linked gene transcription and an equalization of X-linked gene expression between the sexes. This is Zinc finger protein sdc-3 (sdc-3) from Caenorhabditis elegans.